The sequence spans 240 residues: UDP-2,3-diacylglucosamine hydrolase (240 aa).

Residues D8, H10, D41, N79, and H114 each contribute to the Mn(2+) site. 79–80 (NR) provides a ligand contact to substrate. The substrate site is built by D122, S160, N164, K167, and H195. Residues H195 and H197 each coordinate Mn(2+).

The protein belongs to the LpxH family. Mn(2+) is required as a cofactor.

The protein localises to the cell inner membrane. It catalyses the reaction UDP-2-N,3-O-bis[(3R)-3-hydroxytetradecanoyl]-alpha-D-glucosamine + H2O = 2-N,3-O-bis[(3R)-3-hydroxytetradecanoyl]-alpha-D-glucosaminyl 1-phosphate + UMP + 2 H(+). Its pathway is glycolipid biosynthesis; lipid IV(A) biosynthesis; lipid IV(A) from (3R)-3-hydroxytetradecanoyl-[acyl-carrier-protein] and UDP-N-acetyl-alpha-D-glucosamine: step 4/6. Hydrolyzes the pyrophosphate bond of UDP-2,3-diacylglucosamine to yield 2,3-diacylglucosamine 1-phosphate (lipid X) and UMP by catalyzing the attack of water at the alpha-P atom. Involved in the biosynthesis of lipid A, a phosphorylated glycolipid that anchors the lipopolysaccharide to the outer membrane of the cell. The protein is UDP-2,3-diacylglucosamine hydrolase of Enterobacter sp. (strain 638).